The primary structure comprises 288 residues: S-methyl-5'-thioadenosine phosphorylase (288 aa).

Phosphate-binding positions include serine 10, 52 to 53 (RH), and 85 to 86 (TA). Methionine 188 contacts substrate. Threonine 189 contributes to the phosphate binding site. 212-214 (DYD) contacts substrate.

It belongs to the PNP/MTAP phosphorylase family. MTAP subfamily. In terms of assembly, homotrimer.

Its subcellular location is the cytoplasm. The protein localises to the nucleus. It carries out the reaction S-methyl-5'-thioadenosine + phosphate = 5-(methylsulfanyl)-alpha-D-ribose 1-phosphate + adenine. Its pathway is amino-acid biosynthesis; L-methionine biosynthesis via salvage pathway; S-methyl-5-thio-alpha-D-ribose 1-phosphate from S-methyl-5'-thioadenosine (phosphorylase route): step 1/1. Functionally, catalyzes the reversible phosphorylation of S-methyl-5'-thioadenosine (MTA) to adenine and 5-methylthioribose-1-phosphate. Involved in the breakdown of MTA, a major by-product of polyamine biosynthesis. Responsible for the first step in the methionine salvage pathway after MTA has been generated from S-adenosylmethionine. Has broad substrate specificity with 6-aminopurine nucleosides as preferred substrates. The chain is S-methyl-5'-thioadenosine phosphorylase from Caenorhabditis elegans.